The primary structure comprises 461 residues: Ribitol-5-phosphate transferase FKTN (461 aa).

At 1–7 the chain is on the cytoplasmic side; sequence MSRINKN. A required and sufficient for interaction with POMGNT1 region spans residues 6-27; sequence KNVVLALLTLTSSAFLLFQLYY. A helical; Signal-anchor for type II membrane protein membrane pass occupies residues 8 to 28; it reads VVLALLTLTSSAFLLFQLYYY. The Lumenal portion of the chain corresponds to 29–461; sequence KHYLSTKNGA…SEWDEVIQLY (433 aa). Asparagine 92 carries N-linked (GlcNAc...) asparagine glycosylation.

Belongs to the LicD transferase family. As to quaternary structure, forms a complex composed of FKTN/fukutin, FKRP and RXYLT1/TMEM5. Interacts (via transmembrane domain) with POMGNT1; the interaction is direct and is required for normal POMGNT1 location in Golgi membranes. As to expression, expressed in the retina (at protein level). Widely expressed with highest expression in brain, heart, pancreas and skeletal muscle. Expressed at similar levels in control fetal and adult brain. Expressed in migrating neurons, including Cajar-Retzius cells and adult cortical neurons, as well as hippocampal pyramidal cells and cerebellar Purkinje cells. No expression observed in the glia limitans, the subpial astrocytes (which contribute to basement membrane formation) or other glial cells.

It is found in the golgi apparatus membrane. It localises to the cytoplasm. The protein localises to the nucleus. The enzyme catalyses 3-O-[beta-D-GalNAc-(1-&gt;3)-beta-D-GlcNAc-(1-&gt;4)-(O-6-P-alpha-D-Man)]-Thr-[protein] + CDP-L-ribitol = 3-O-[Rib-ol-P-3-beta-D-GalNAc-(1-&gt;3)-beta-D-GlcNAc-(1-&gt;4)-(O-6-P-alpha-D-Man)]-Thr-[protein] + CMP + H(+). Its pathway is protein modification; protein glycosylation. Its function is as follows. Catalyzes the transfer of a ribitol-phosphate from CDP-ribitol to the distal N-acetylgalactosamine of the phosphorylated O-mannosyl trisaccharide (N-acetylgalactosamine-beta-3-N-acetylglucosamine-beta-4-(phosphate-6-)mannose), a carbohydrate structure present in alpha-dystroglycan (DAG1). This constitutes the first step in the formation of the ribitol 5-phosphate tandem repeat which links the phosphorylated O-mannosyl trisaccharide to the ligand binding moiety composed of repeats of 3-xylosyl-alpha-1,3-glucuronic acid-beta-1. Required for normal location of POMGNT1 in Golgi membranes, and for normal POMGNT1 activity. May interact with and reinforce a large complex encompassing the outside and inside of muscle membranes. Could be involved in brain development. The sequence is that of Ribitol-5-phosphate transferase FKTN from Homo sapiens (Human).